A 300-amino-acid chain; its full sequence is Probable low-salt glycan biosynthesis reductase Agl14 (300 aa).

NADH contacts are provided by residues 10-12 (GLL), 46-47 (DI), and 70-72 (AYT). Residues 11-12 (LL), 46-47 (DI), 70-72 (AYT), Y109, Y135, and K139 contribute to the NADPH site. NADH-binding residues include Y135 and K139. Y135 acts as the Proton donor/acceptor in catalysis.

This sequence belongs to the dTDP-4-dehydrorhamnose reductase family.

It functions in the pathway protein modification; protein glycosylation. It participates in cell surface structure biogenesis; S-layer biogenesis. In terms of biological role, reductase involved in N-glycan biosynthetic pathway that takes place under low-salt conditions (1.75 M instead of 3.4 M). Participates in the formation of the tetrasaccharide present at 'Asn-532' of S-layer glycoprotein Csg, consisting of a sulfated hexose, 2 hexoses and rhamnose. Involved in the addition of final rhamnose (sugar 4) of the tetrasaccharide on the dolichol phosphate carrier. This is Probable low-salt glycan biosynthesis reductase Agl14 (agl14) from Haloferax volcanii (strain ATCC 29605 / DSM 3757 / JCM 8879 / NBRC 14742 / NCIMB 2012 / VKM B-1768 / DS2) (Halobacterium volcanii).